The following is a 241-amino-acid chain: MAGHSKWANIQHRKGRQDEKRGAAFSKIAKEITVASKMGGGDINFNPRLRVAVDKAKGVNMPKDKIDTAIKKGTGELEGVEYIEIRYEGYGIGGAAIMVDCLTDNKVRTVAEVRHAFSKFGGNMGSDGCVAFQFKHCGQMIFAPGTDEGALMDAAIEAGADDVTTNDDGSIEVLTPPNDYMAVKDALEAAGFKPEFGEVTMKPEGENVFAGEEGVKMQKLLDALENLDDVQEIYTTAVIED.

A disordered region spans residues 1-22 (MAGHSKWANIQHRKGRQDEKRG).

The protein belongs to the TACO1 family.

The protein resides in the cytoplasm. The protein is Probable transcriptional regulatory protein Daro_4067 of Dechloromonas aromatica (strain RCB).